The primary structure comprises 503 residues: MAIKAEEISALLRSQIENYESEMSVTDVGTVLQIGDGIALIHGLNDVMAGELVEFHNGVLGLAQNLEESNVGVVILGPYEEISEGDEVKRTGRIMEVPVGEEMIGRVVNPLGQPIDGQGPINATKTRPVEKKATGVMDRKSVDEPLQTGIKAIDALVPIGRGQRELIIGDRQTGKTTVAIDSILNQKDQDTICIYVAIGQKDSTVRANVEKLRQAGALDYTIVVSASAADPAPLLYIAPYSGVTMGEEFMFNGKHVLIVYDDLTKQAAAYRELSLLLRRPPGREAYPGDVFYLHSRLLERAAKLNDDLGGGSITALPIIETQAGDISAYVPTNVISITDGQIFLQSDLFFSGVRPAINAGQSVSRVGGSAQIKAMKKVAGTLRLDLASYRELESFAQFGSDLDEFTAKKLARGERTVEVLKQGQNNPLPVEHQVLIIFALTKGYLDDIPVQDINRFEEEFNHWAESNATELLNEIRETGALPDADKFDSAITEFKKGFNKSEE.

169-176 (GDRQTGKT) lines the ATP pocket.

This sequence belongs to the ATPase alpha/beta chains family. F-type ATPases have 2 components, CF(1) - the catalytic core - and CF(0) - the membrane proton channel. CF(1) has five subunits: alpha(3), beta(3), gamma(1), delta(1), epsilon(1). CF(0) has three main subunits: a(1), b(2) and c(9-12). The alpha and beta chains form an alternating ring which encloses part of the gamma chain. CF(1) is attached to CF(0) by a central stalk formed by the gamma and epsilon chains, while a peripheral stalk is formed by the delta and b chains.

It is found in the cell membrane. The enzyme catalyses ATP + H2O + 4 H(+)(in) = ADP + phosphate + 5 H(+)(out). In terms of biological role, produces ATP from ADP in the presence of a proton gradient across the membrane. The alpha chain is a regulatory subunit. The sequence is that of ATP synthase subunit alpha from Staphylococcus epidermidis (strain ATCC 35984 / DSM 28319 / BCRC 17069 / CCUG 31568 / BM 3577 / RP62A).